The sequence spans 390 residues: METFLFTSESVNEGHPDKLCDQVSDAILDACLEQDPESKVACETCTKTNMVMVFGEITTKATVDYEKIVRDTCRGIGFTSADVGLDADHCKVLVNIEQQSPDIAQGVHGHLTKKPEEIGAGDQGHMFGYATDETPELMPLTHVWATKLGAKLTEVRKNKTCPWLRPDGKTQVTVEYRNDNGAMIPLRVHTILISTQHDETVTNDQIAQDLKEHVIKPVVPAEYLDENTIFHLNPSGRFVIGGPHGDAGLTGRKIIIDTYGGWGAHGGGAFSGKDPTKVDRSGAYIVRQAAKSVVASGLARRCIVQVSYAIGVAEPLSVFVDTYKTGTIPDKDILTLIKENFDFRPGMMSINLDLLRGGNFRYQKTAAYGHFGRDDPDFTWETVKVLNPQA.

Residue E9 participates in Mg(2+) binding. Position 15 (H15) interacts with ATP. Position 43 (E43) interacts with K(+). Positions 56 and 99 each coordinate L-methionine. Residues 167–169 (DGK), 235–238 (SGRF), D246, 252–253 (RK), A269, K273, and K277 contribute to the ATP site. D246 serves as a coordination point for L-methionine. K277 is a binding site for L-methionine.

Belongs to the AdoMet synthase family. Homotetramer. Mn(2+) serves as cofactor. Requires Mg(2+) as cofactor. Co(2+) is required as a cofactor. The cofactor is K(+).

Its subcellular location is the cytoplasm. The catalysed reaction is L-methionine + ATP + H2O = S-adenosyl-L-methionine + phosphate + diphosphate. The protein operates within amino-acid biosynthesis; S-adenosyl-L-methionine biosynthesis; S-adenosyl-L-methionine from L-methionine: step 1/1. Functionally, catalyzes the formation of S-adenosylmethionine from methionine and ATP. The reaction comprises two steps that are both catalyzed by the same enzyme: formation of S-adenosylmethionine (AdoMet) and triphosphate, and subsequent hydrolysis of the triphosphate. The polypeptide is S-adenosylmethionine synthase 1 (SAM1) (Petunia hybrida (Petunia)).